We begin with the raw amino-acid sequence, 1200 residues long: Nuclear envelope pore membrane protein POM 121 (1200 aa).

A disordered region spans residues 1–29; that stretch reads MSPAAAAADGGERRRPPLGGREGRSRARG. Residues 1 to 56 are cisternal side; sequence MSPAAAAADGGERRRPPLGGREGRSRARGYGGPAGAAALGLALLGLALYLVPAAAA. Residues 10–25 show a composition bias toward basic and acidic residues; it reads GGERRRPPLGGREGRS. The chain crosses the membrane as a helical span at residues 57–77; that stretch reads LAWLAVGASAAWWGLSREPRG. The segment at 76-1200 is pore side; sequence RGPRALSSFV…QARRQHTRKK (1125 aa). Phosphoserine is present on Ser83. 2 disordered regions span residues 91–167 and 177–196; these read HPRP…SAVQ and PTPL…GPLS. The segment covering 143-152 has biased composition (basic and acidic residues); the sequence is LRQDPRERPG. Ser244 bears the Phosphoserine mark. Disordered stretches follow at residues 294–328, 345–509, 530–627, 640–692, 706–744, 1075–1151, and 1173–1200; these read KKKR…SAFE, SLKR…ITAE, PDDA…SDSK, SITP…LATP, PATP…PTFK, TSGT…SSLS, and PSFS…TRKK. A compositionally biased stretch (basic and acidic residues) spans 298 to 312; that stretch reads TVAEEDQLHLDGQEN. Ser319, Ser322, Ser325, Ser345, Ser355, Ser367, and Ser370 each carry phosphoserine. A compositionally biased stretch (low complexity) spans 365-374; that stretch reads TSSVSSLASA. The span at 379–397 shows a compositional bias: polar residues; sequence IPSSSRNAITSSYSSTRGI. Over residues 404–419 the composition is skewed to low complexity; it reads SGPTSSPFSSPASSRS. A phosphoserine mark is found at Ser408, Ser409, Ser412, Ser413, Ser416, and Ser417. 2 stretches are compositionally biased toward basic and acidic residues: residues 424 to 433 and 446 to 456; these read RPAKKTREEE and TDKESPGEKVT. Composition is skewed to low complexity over residues 463-477, 546-574, 581-598, and 605-621; these read QQSS…GSSG, PPFT…PLLE, ESPA…TVAA, and PSLL…PLAS. Over residues 640–657 the composition is skewed to polar residues; that stretch reads SITPLTDSKSSGVSQAEQ. 4 stretches are compositionally biased toward low complexity: residues 658 to 669, 681 to 692, 715 to 742, and 1075 to 1099; these read SVSTPASTASSP, SPPASSSSLATP, SPLP…TTPT, and TSGT…GSLS. The segment covering 1100–1121 has biased composition (polar residues); that stretch reads QNTLGAPSQGSPFAFSVGSTPE. A compositionally biased stretch (basic residues) spans 1190–1200; the sequence is LQARRQHTRKK.

The protein belongs to the POM121 family. Post-translationally, proteolytically cleaved by caspase-3 during apoptosis.

The protein resides in the nucleus. The protein localises to the nuclear pore complex. It localises to the nucleus membrane. Its subcellular location is the endoplasmic reticulum membrane. In terms of biological role, essential component of the nuclear pore complex (NPC). The repeat-containing domain may be involved in anchoring components of the pore complex to the pore membrane. When overexpressed in cells induces the formation of cytoplasmic annulate lamellae (AL). This Mus musculus (Mouse) protein is Nuclear envelope pore membrane protein POM 121 (Pom121).